Here is a 300-residue protein sequence, read N- to C-terminus: Bis(5'-nucleosyl)-tetraphosphatase, symmetrical (300 aa).

Belongs to the Ap4A hydrolase family.

The enzyme catalyses P(1),P(4)-bis(5'-adenosyl) tetraphosphate + H2O = 2 ADP + 2 H(+). In terms of biological role, hydrolyzes diadenosine 5',5'''-P1,P4-tetraphosphate to yield ADP. This Pseudomonas syringae pv. tomato (strain ATCC BAA-871 / DC3000) protein is Bis(5'-nucleosyl)-tetraphosphatase, symmetrical.